The sequence spans 482 residues: UDP-N-acetylmuramate--L-alanine ligase (482 aa).

115 to 121 (GTHGKTT) is a binding site for ATP.

Belongs to the MurCDEF family.

It localises to the cytoplasm. The enzyme catalyses UDP-N-acetyl-alpha-D-muramate + L-alanine + ATP = UDP-N-acetyl-alpha-D-muramoyl-L-alanine + ADP + phosphate + H(+). The protein operates within cell wall biogenesis; peptidoglycan biosynthesis. Functionally, cell wall formation. The polypeptide is UDP-N-acetylmuramate--L-alanine ligase (Rhodospirillum centenum (strain ATCC 51521 / SW)).